Reading from the N-terminus, the 142-residue chain is Glia maturation factor beta (142 aa).

Position 2 is an N-acetylserine (serine 2). The 136-residue stretch at serine 4–glycine 139 folds into the ADF-H domain.

This sequence belongs to the actin-binding proteins ADF family. GMF subfamily. Phosphorylated; stimulated by phorbol ester.

In terms of biological role, this protein causes differentiation of brain cells, stimulation of neural regeneration, and inhibition of proliferation of tumor cells. This is Glia maturation factor beta (GMFB) from Homo sapiens (Human).